Consider the following 434-residue polypeptide: MSILKIQAREIFDSRGNPTIEVDLYTKKGLFRAAVPSGASTGIYEALELRDNDKTRFLGKGVSKAVEHVNKTIAPALVNKNVSVVEQEKIDKLMIEMDGSENKSKFGANAILGVSLAVCKAGAAEKDIPLYRHIADLAGNKEVILPVPAFNVINGGSHAGNKLAMQEFMILPIGAECFKEAMRIGAEVYHNLKNVIKEKYGKDATNVGDEGGFAPNILENKEALELLKTAISKAGYADKIVIGMDVAASEFYRDGKYDLDFKSPDDRSRYITPDQLADLYKGFVKNYPVVSIEDPFDQDDWPAWKKFTAESGIQVVGDDLTVTNPKRIAKAVQEKSCNCLLLKVNQIGSVTESLQACKLAQSNGWGVMVSHRSGETEDTFIADLVVGLCTGQIKTGAPCRSERLAKYNQLLRIEEELGSKARFAGRNFRNPRVN.

S40 provides a ligand contact to Mg(2+). Substrate-binding residues include H158 and E167. Catalysis depends on E210, which acts as the Proton donor. 3 residues coordinate Mg(2+): D245, E293, and D318. Substrate contacts are provided by E293 and D318. The Proton acceptor role is filled by K343. Substrate-binding positions include 370–373 (SHRS) and K394.

Belongs to the enolase family. As to quaternary structure, homodimer. It depends on Mg(2+) as a cofactor.

It is found in the cytoplasm. The enzyme catalyses (2R)-2-phosphoglycerate = phosphoenolpyruvate + H2O. It functions in the pathway carbohydrate degradation; glycolysis; pyruvate from D-glyceraldehyde 3-phosphate: step 4/5. In Python regius (Ball python), this protein is Alpha-enolase.